The sequence spans 114 residues: Probable 4-amino-4-deoxy-L-arabinose-phosphoundecaprenol flippase subunit ArnE (114 aa).

An EamA domain is found at 39 to 112; it reads RSPWLWLALF…VIGGVALLGQ (74 aa). The next 3 helical transmembrane spans lie at 41–61, 64–84, and 91–111; these read PWLW…LLVL, LPVS…TLIA, and PVDV…ALLG.

The protein belongs to the ArnE family. In terms of assembly, heterodimer of ArnE and ArnF.

It is found in the cell inner membrane. It participates in bacterial outer membrane biogenesis; lipopolysaccharide biosynthesis. Functionally, translocates 4-amino-4-deoxy-L-arabinose-phosphoundecaprenol (alpha-L-Ara4N-phosphoundecaprenol) from the cytoplasmic to the periplasmic side of the inner membrane. In Pseudomonas fluorescens (strain Pf0-1), this protein is Probable 4-amino-4-deoxy-L-arabinose-phosphoundecaprenol flippase subunit ArnE.